Reading from the N-terminus, the 265-residue chain is Protein N-terminal and lysine N-methyltransferase EFM7 (265 aa).

S-adenosyl-L-methionine-binding positions include tryptophan 55, 81–83 (GAA), aspartate 103, tryptophan 141, and alanine 169.

It belongs to the class I-like SAM-binding methyltransferase superfamily. EFM7 family.

It is found in the cytoplasm. Its function is as follows. S-adenosyl-L-methionine-dependent protein methyltransferase that trimethylates the N-terminal glycine 'Gly-2' of elongation factor 1-alpha, before also catalyzing the mono- and dimethylation of 'Lys-3'. This Gibberella zeae (strain ATCC MYA-4620 / CBS 123657 / FGSC 9075 / NRRL 31084 / PH-1) (Wheat head blight fungus) protein is Protein N-terminal and lysine N-methyltransferase EFM7.